Reading from the N-terminus, the 350-residue chain is Deoxyhypusine synthase-like protein (350 aa).

The protein belongs to the deoxyhypusine synthase family.

This is Deoxyhypusine synthase-like protein from Chlorobaculum tepidum (strain ATCC 49652 / DSM 12025 / NBRC 103806 / TLS) (Chlorobium tepidum).